Here is a 134-residue protein sequence, read N- to C-terminus: Small ribosomal subunit protein bS6 (134 aa).

The protein belongs to the bacterial ribosomal protein bS6 family.

Functionally, binds together with bS18 to 16S ribosomal RNA. In Pelodictyon phaeoclathratiforme (strain DSM 5477 / BU-1), this protein is Small ribosomal subunit protein bS6.